Consider the following 579-residue polypeptide: O-fucosyltransferase 24 (579 aa).

A helical; Signal-anchor for type II membrane protein membrane pass occupies residues 58 to 78 (LWAFSLFLLSILGISLRLGLC). The N-linked (GlcNAc...) asparagine glycan is linked to Asn-133. 355–357 (HLR) lines the substrate pocket. 3 N-linked (GlcNAc...) asparagine glycosylation sites follow: Asn-528, Asn-573, and Asn-576.

Belongs to the glycosyltransferase GT106 family.

It is found in the membrane. Its pathway is glycan metabolism. The polypeptide is O-fucosyltransferase 24 (Arabidopsis thaliana (Mouse-ear cress)).